The sequence spans 338 residues: tRNA N6-adenosine threonylcarbamoyltransferase (338 aa).

Residues His-110 and His-114 each contribute to the Fe cation site. Substrate contacts are provided by residues 132 to 136, Asp-165, Gly-178, and Asn-274; that span reads VLSGG. Asp-298 contributes to the Fe cation binding site.

This sequence belongs to the KAE1 / TsaD family. Fe(2+) serves as cofactor.

The protein localises to the cytoplasm. The enzyme catalyses L-threonylcarbamoyladenylate + adenosine(37) in tRNA = N(6)-L-threonylcarbamoyladenosine(37) in tRNA + AMP + H(+). In terms of biological role, required for the formation of a threonylcarbamoyl group on adenosine at position 37 (t(6)A37) in tRNAs that read codons beginning with adenine. Is involved in the transfer of the threonylcarbamoyl moiety of threonylcarbamoyl-AMP (TC-AMP) to the N6 group of A37, together with TsaE and TsaB. TsaD likely plays a direct catalytic role in this reaction. The chain is tRNA N6-adenosine threonylcarbamoyltransferase from Borrelia recurrentis (strain A1).